We begin with the raw amino-acid sequence, 412 residues long: Class E basic helix-loop-helix protein 40 (412 aa).

Residues 1–21 (MERIPSAQPPPTCLPKAPGLE) are disordered. Residues 1–139 (MERIPSAQPP…LSGRNVEAGQ (139 aa)) form an essential for interaction with BMAL1, E-box binding and repressor activity against the CLOCK-BMAL1 heterodimer region. One can recognise a bHLH domain in the interval 52-107 (TYKLPHRLIEKKRRDRINECIAQLKDLLPEHLKLTTLGHLEKAVVLELTLKHVKAL). The interval 75 to 79 (LKDLL) is necessary for interaction with RXRA and repressor activity against RXRA. The region spanning 142 to 175 (FCSGFQTCAREVLQYLAKHENTRDLKSSQLVTHL) is the Orange domain. A Glycyl lysine isopeptide (Lys-Gly) (interchain with G-Cter in SUMO1, SUMO2 and SUMO3) cross-link involves residue Lys-159. Residue Lys-167 forms a Glycyl lysine isopeptide (Lys-Gly) (interchain with G-Cter in SUMO2) linkage. Disordered regions lie at residues 182 to 256 (LLQG…ELRV) and 279 to 298 (KQES…SDDE). At Ser-235 the chain carries Phosphoserine. A Glycyl lysine isopeptide (Lys-Gly) (interchain with G-Cter in SUMO1); alternate cross-link involves residue Lys-279. Residue Lys-279 forms a Glycyl lysine isopeptide (Lys-Gly) (interchain with G-Cter in SUMO1, SUMO2 and SUMO3); alternate linkage. A Glycyl lysine isopeptide (Lys-Gly) (interchain with G-Cter in SUMO2); alternate cross-link involves residue Lys-279. A Glycyl lysine isopeptide (Lys-Gly) (interchain with G-Cter in SUMO2) cross-link involves residue Lys-288. Residue Ser-383 is modified to Phosphoserine.

In terms of assembly, homodimer. Heterodimer with BHLHE41/DEC2. Interacts with TCF3/E47. Interacts with ubiquitin-conjugating enzyme UBE2I/UBC9. Interacts with HDAC1, SUMO1, RXRA and BMAL1. Post-translationally, ubiquitinated; which may lead to proteasomal degradation. In terms of processing, sumoylation inhibits its ubiquitination and promotes its negative regulation of the CLOCK-BMAL1 heterodimer transcriptional activator activity.

It is found in the cytoplasm. The protein resides in the nucleus. In terms of biological role, transcriptional repressor involved in the regulation of the circadian rhythm by negatively regulating the activity of the clock genes and clock-controlled genes. Acts as the negative limb of a novel autoregulatory feedback loop (DEC loop) which differs from the one formed by the PER and CRY transcriptional repressors (PER/CRY loop). Both these loops are interlocked as it represses the expression of PER1/2 and in turn is repressed by PER1/2 and CRY1/2. Represses the activity of the circadian transcriptional activator: CLOCK-BMAL1|BMAL2 heterodimer by competing for the binding to E-box elements (5'-CACGTG-3') found within the promoters of its target genes. Negatively regulates its own expression and the expression of DBP and BHLHE41/DEC2. Acts as a corepressor of RXR and the RXR-LXR heterodimers and represses the ligand-induced RXRA and NR1H3/LXRA transactivation activity. May be involved in the regulation of chondrocyte differentiation via the cAMP pathway. Represses the transcription of NR0B2 and attentuates the transactivation of NR0B2 by the CLOCK-BMAL1 complex. Drives the circadian rhythm of blood pressure through transcriptional repression of ATP1B1 in the cardiovascular system. The polypeptide is Class E basic helix-loop-helix protein 40 (BHLHE40) (Bos taurus (Bovine)).